Here is a 222-residue protein sequence, read N- to C-terminus: Large ribosomal subunit protein uL1 (222 aa).

The protein belongs to the universal ribosomal protein uL1 family. Part of the 50S ribosomal subunit.

Functionally, binds directly to 23S rRNA. Probably involved in E site tRNA release. Protein L1 is also a translational repressor protein, it controls the translation of its operon by binding to its mRNA. The protein is Large ribosomal subunit protein uL1 of Pyrobaculum calidifontis (strain DSM 21063 / JCM 11548 / VA1).